The sequence spans 171 residues: MDKKSLYKYLLLRSTGDMHKAKSPTIMTRVTNNVYLGNYKNAMDAPSSEVKFKYVLNLTMDKYTLPNSNINIIHIPLVDDTTTDISKYFDDVTAFLSKCDQRNEPVLVHCAAGVNRSGAMILAYLMSKNKESSPMLYFLYVYHSMRDLRGAFVENPSFKRQIIEKYVIDKN.

The region spanning Ser23–Asn171 is the Tyrosine-protein phosphatase domain. Catalysis depends on Cys110, which acts as the Phosphocysteine intermediate.

It belongs to the protein-tyrosine phosphatase family. Non-receptor class dual specificity subfamily. In terms of assembly, homodimer.

It is found in the virion. The protein resides in the host cytoplasm. The catalysed reaction is O-phospho-L-tyrosyl-[protein] + H2O = L-tyrosyl-[protein] + phosphate. The enzyme catalyses O-phospho-L-seryl-[protein] + H2O = L-seryl-[protein] + phosphate. In terms of biological role, serine/tyrosine phosphatase which down-regulates cellular antiviral response by dephosphorylating activated host STAT1 and blocking interferon (IFN)-stimulated innate immune responses. Dephosphorylates the OPG144 protein. This chain is Dual specificity protein phosphatase OPG106 (OPG106), found in Homo sapiens (Human).